The primary structure comprises 196 residues: Probable malonic semialdehyde reductase RutE (196 aa).

Belongs to the nitroreductase family. HadB/RutE subfamily. It depends on FMN as a cofactor.

The catalysed reaction is 3-hydroxypropanoate + NADP(+) = 3-oxopropanoate + NADPH + H(+). Its function is as follows. May reduce toxic product malonic semialdehyde to 3-hydroxypropionic acid, which is excreted. In Escherichia coli (strain K12 / MC4100 / BW2952), this protein is Probable malonic semialdehyde reductase RutE.